Reading from the N-terminus, the 332-residue chain is MSDFAFFALEALIKCIIIIAIFASLAGLATYAERKVLAYFQRRIGPDMVGPFGLIQLVADMIKLFTKEDIIPSNSQKFIFAIAPLISAICAFVSLAAIPMLPEFTLFGKVIQPIVADINVALLFVIGTSGLCFYAVFLGGLASNNKWSILGAARGLVAIISYESVGALALIAIVMLVGSFSLVDINNYQSDGFFSWLIFKQPLAFVLFIIALFIETNRTPLCLTENDAEIVAGYGTEYSGLRWGMFFIGEYASMIAGAILVTLLFLGGFNSFWIIPGWIMMIVKSSFIFFWYFWARAAFPQLRPDQVMKMCYLILIPLAVLNLLITALAVLL.

Helical transmembrane passes span 4–24, 44–64, 78–98, 120–140, 165–185, 194–214, 255–275, 279–299, and 312–332; these read FAFFALEALIKCIIIIAIFAS, IGPDMVGPFGLIQLVADMIKL, FIFAIAPLISAICAFVSLAAI, VALLFVIGTSGLCFYAVFLGG, VGALALIAIVMLVGSFSLVDI, FSWLIFKQPLAFVLFIIALFI, IAGAILVTLLFLGGFNSFWII, IMMIVKSSFIFFWYFWARAAF, and YLILIPLAVLNLLITALAVLL.

Belongs to the complex I subunit 1 family. In terms of assembly, NDH-1 is composed of 14 different subunits. Subunits NuoA, H, J, K, L, M, N constitute the membrane sector of the complex.

The protein resides in the cell inner membrane. It carries out the reaction a quinone + NADH + 5 H(+)(in) = a quinol + NAD(+) + 4 H(+)(out). In terms of biological role, NDH-1 shuttles electrons from NADH, via FMN and iron-sulfur (Fe-S) centers, to quinones in the respiratory chain. The immediate electron acceptor for the enzyme in this species is believed to be ubiquinone. Couples the redox reaction to proton translocation (for every two electrons transferred, four hydrogen ions are translocated across the cytoplasmic membrane), and thus conserves the redox energy in a proton gradient. This subunit may bind ubiquinone. This Campylobacter jejuni (strain RM1221) protein is NADH-quinone oxidoreductase subunit H.